The sequence spans 171 residues: UPF0763 protein Hac_0849 (171 aa).

Belongs to the UPF0763 family.

In Helicobacter acinonychis (strain Sheeba), this protein is UPF0763 protein Hac_0849.